The primary structure comprises 81 residues: U-megalopygitoxin(3)-Mo4 (81 aa).

The first 20 residues, 1 to 20 (MNSKFVLIVVFLAVVSICFA), serve as a signal peptide directing secretion.

It belongs to the caterpillar 3 family. Post-translationally, contains 3 disulfide bonds. In terms of tissue distribution, expressed by the venom apparatus.

The protein resides in the secreted. Its function is as follows. Probable toxin. This is U-megalopygitoxin(3)-Mo4 from Megalopyge opercularis (Southern flannel moth).